The primary structure comprises 143 residues: Peptide methionine sulfoxide reductase MsrB (143 aa).

One can recognise a MsrB domain in the interval 16 to 139; that stretch reads DAELRRRLTP…NSAALNFESR (124 aa). Residues cysteine 55, cysteine 58, cysteine 104, and cysteine 107 each contribute to the Zn(2+) site. The active-site Nucleophile is the cysteine 128.

This sequence belongs to the MsrB Met sulfoxide reductase family. It depends on Zn(2+) as a cofactor.

The enzyme catalyses L-methionyl-[protein] + [thioredoxin]-disulfide + H2O = L-methionyl-(R)-S-oxide-[protein] + [thioredoxin]-dithiol. This is Peptide methionine sulfoxide reductase MsrB from Burkholderia orbicola (strain MC0-3).